The following is a 319-amino-acid chain: Probable NAD(P)H-dependent D-xylose reductase xyl1 (319 aa).

N-linked (GlcNAc...) asparagine glycosylation occurs at Asn-26. Catalysis depends on Tyr-50, which acts as the Proton donor. His-112 contributes to the substrate binding site. Asn-141 and Asn-167 each carry an N-linked (GlcNAc...) asparagine glycan. NAD(+)-binding positions include 166–167 (SN), 215–224 (SSFGPLSFLE), and 271–281 (KSNNPQRLKQN).

The protein belongs to the aldo/keto reductase family.

The enzyme catalyses xylitol + NAD(+) = D-xylose + NADH + H(+). It catalyses the reaction xylitol + NADP(+) = D-xylose + NADPH + H(+). The protein operates within carbohydrate metabolism; D-xylose degradation. In terms of biological role, catalyzes the initial reaction in the xylose utilization pathway by reducing D-xylose into xylitol. Xylose is a major component of hemicelluloses such as xylan. Most fungi utilize D-xylose via three enzymatic reactions, xylose reductase (XR), xylitol dehydrogenase (XDH), and xylulokinase, to form xylulose 5-phosphate, which enters pentose phosphate pathway. The polypeptide is Probable NAD(P)H-dependent D-xylose reductase xyl1 (xyl1) (Aspergillus niger (strain ATCC MYA-4892 / CBS 513.88 / FGSC A1513)).